Consider the following 947-residue polypeptide: MEGKVFSGQKLILVMLLLGHLHGFSSCIEKERKALLELKKFVMSRCEECEYDSVLPTWTNDTKSDCCQWENIKCNRTSRRLTGLSLYTSYYLEISLLNLSLLHPFEEVRSLDLSNSRLNGLVDDVEGYKSLRRLRNLQILNFSSNEFNNSIFPFLNAATSLTTLSLRRNNMYGPIPLKELKNLTNLELLDLSGNRIDGSMPVREFPYLKKLKALDLSSNGIYSSMEWQGLKNLTNLEVLSLGYNYFDGPIPIEVFCEMKNLQELDLRGINFVGQLPLCFGNLNKLRFLDLSSNQLTGNIPPSFSSLESLEYLSLSDNSFEGFFSLNPLTNLTKLKVFIFSSKDDMVQVKIESTWQPLFQLSVLVLRLCSLEKIPNFLMYQKNLHVVDLSGNRISGIIPTWLLENNPELEVLQLKNNSFTIFQMPTSVHNLQVLDFSENNIGGLFPDNFGRVLPNLVHMNGSNNGFQGNFPSSMGEMYNISFLDLSYNNLSGELPQSFVSSCFSLSILQLSHNKFSGHFLPRQTNFTSLIVLRINNNLFTGKIGVGLLTLVDLCILDMSNNFLEGELPPLLLVFEYLNFLDLSGNLLSGALPSHVSLDNVLFLHNNNFTGPIPDTFLGSIQILDLRNNKLSGNIPQFVDTQDISFLLLRGNSLTGYIPSTLCEFSKMRLLDLSDNKLNGFIPSCFNNLSFGLARKEEITNYYVAVALESFYLGFYKSTFVVENFRLDYSNYFEIDVKFATKQRYDSYIGAFQFSEGTLNSMYGLDLSSNELSGVIPAELGDLFKLRALNLSHNFLSSHIPDSFSKLQDIESLDLSYNMLQGSIPHQLTNLTSLAIFNVSYNNLSGIIPQGKQFNTFDENSYLGNPLLCGPPTDTSCETKKNSEENANGGEEDDKEVAIDMLVFYWSTAGTYVTALIGILVLMCVDCSWRRAWLRLVDAFIASAKSKLA.

The N-terminal stretch at 1–27 is a signal peptide; it reads MEGKVFSGQKLILVMLLLGHLHGFSSC. Topologically, residues 28–899 are extracellular; sequence IEKERKALLE…EDDKEVAIDM (872 aa). 3 N-linked (GlcNAc...) asparagine glycosylation sites follow: Asn60, Asn75, and Asn98. 9 LRR repeats span residues 105–128, 134–157, 159–182, 183–207, 209–232, 233–257, 259–281, 282–305, and 307–330; these read FEEVRSLDLSNSRLNGLVDDVEGY, LRNLQILNFSSNEFNNSIFPFLNA, TSLTTLSLRRNNMYGPIPLKELKN, LTNLELLDLSGNRIDGSMPVREFPY, KKLKALDLSSNGIYSSMEWQGLKN, LTNLEVLSLGYNYFDGPIPIEVFCE, KNLQELDLRGINFVGQLPLCFGN, LNKLRFLDLSSNQLTGNIPPSFSS, and ESLEYLSLSDNSFEGFFSLNPLTN. Asn141, Asn148, and Asn182 each carry an N-linked (GlcNAc...) asparagine glycan. The N-linked (GlcNAc...) asparagine glycan is linked to Asn232. Residue Asn330 is glycosylated (N-linked (GlcNAc...) asparagine). One copy of the LRR 10; degenerate repeat lies at 332 to 356; it reads TKLKVFIFSSKDDMVQVKIESTWQP. 18 LRR repeats span residues 357–380, 381–404, 405–427, 428–450, 452–476, 477–500, 502–527, 529–549, 550–575, 577–598, 600–616, 617–640, 642–663, 664–686, 757–780, 781–804, 805–829, and 831–854; these read LFQLSVLVLRLCSLEKIPNFLMYQ, KNLHVVDLSGNRISGIIPTWLLEN, NPELEVLQLKNNSFTIFQMPTSV, HNLQVLDFSENNIGGLFPDNFGR, LPNLVHMNGSNNGFQGNFPSSMGEM, YNISFLDLSYNNLSGELPQSFVSS, FSLSILQLSHNKFSGHFLPRQTNFTS, IVLRINNNLFTGKIGVGLLTL, VDLCILDMSNNFLEGELPPLLLVFEY, NFLDLSGNLLSGALPSHVSLDN, LFLHNNNFTGPIPDTFL, GSIQILDLRNNKLSGNIPQFVDTQ, ISFLLLRGNSLTGYIPSTLCEF, SKMRLLDLSDNKLNGFIPSCFNN, LNSMYGLDLSSNELSGVIPAELGD, LFKLRALNLSHNFLSSHIPDSFSK, LQDIESLDLSYNMLQGSIPHQLTNL, and SLAIFNVSYNNLSGIIPQGKQFNT. N-linked (GlcNAc...) asparagine glycosylation is present at Asn415. Residues Asn459, Asn478, Asn488, and Asn524 are each glycosylated (N-linked (GlcNAc...) asparagine). Asn606 carries an N-linked (GlcNAc...) asparagine glycan. An N-linked (GlcNAc...) asparagine glycan is attached at Asn686. N-linked (GlcNAc...) asparagine glycosylation is found at Asn788, Asn828, Asn836, and Asn841. A helical transmembrane segment spans residues 900-920; the sequence is LVFYWSTAGTYVTALIGILVL. At 921 to 947 the chain is on the cytoplasmic side; the sequence is MCVDCSWRRAWLRLVDAFIASAKSKLA.

Belongs to the RLP family.

It localises to the cell membrane. This Arabidopsis thaliana (Mouse-ear cress) protein is Receptor-like protein 56.